The following is a 682-amino-acid chain: Potassium-transporting ATPase ATP-binding subunit (682 aa).

A run of 4 helical transmembrane segments spans residues 34–54 (PVMF…IAMA), 62–82 (ALFS…ANFA), 219–239 (IALT…TATL), and 254–274 (VLVA…LSAI). Residue aspartate 307 is the 4-aspartylphosphate intermediate of the active site. ATP contacts are provided by residues aspartate 344, glutamate 348, 377–384 (FTAQSRMS), and lysine 395. Residues aspartate 518 and aspartate 522 each coordinate Mg(2+). 3 consecutive transmembrane segments (helical) span residues 588-608 (FAII…LNIM), 616-636 (AILS…PLAL), and 656-676 (IYGL…DLLL).

This sequence belongs to the cation transport ATPase (P-type) (TC 3.A.3) family. Type IA subfamily. As to quaternary structure, the system is composed of three essential subunits: KdpA, KdpB and KdpC.

It localises to the cell inner membrane. The catalysed reaction is K(+)(out) + ATP + H2O = K(+)(in) + ADP + phosphate + H(+). In terms of biological role, part of the high-affinity ATP-driven potassium transport (or Kdp) system, which catalyzes the hydrolysis of ATP coupled with the electrogenic transport of potassium into the cytoplasm. This subunit is responsible for energy coupling to the transport system and for the release of the potassium ions to the cytoplasm. This is Potassium-transporting ATPase ATP-binding subunit from Escherichia coli O17:K52:H18 (strain UMN026 / ExPEC).